Consider the following 2147-residue polypeptide: Probable serine/threonine-protein kinase roco6 (2147 aa).

Over 1–1055 (MNSIHKQHYT…LDHSRVEFNR (1055 aa)) the chain is Extracellular. LRR repeat units lie at residues 69–89 (DMKYLDLSKRMIYSLELMMIP), 101–122 (SISILNLNDNLLGEIPESLKQL), 124–145 (QLISLSIRGNHILEIPLWFPEE), 148–169 (LLRKLDVSHNAISSVPNTFNKF), 171–192 (ILEDLNLSNNYISYIHPSLFPE), 193–214 (GIMRLNLSNNLFREVELPPWFE), 215–236 (SLLTLDISGNKLKHLGNLPFHL), 237–256 (VRVSIDDNHLESIDHKVILR), 306–328 (HLTHLDLSGNCISVLPPELANLT), 329–350 (ELVRLDLSFNILTTLPLYIVSY), and 352–372 (RLEHLDLQGTLDTLVSPPRRI). One can recognise a Roc domain in the interval 390–750 (QGEPSYRVKL…DLLKKTVVEL (361 aa)). The small GTPase-like stretch occupies residues 390-750 (QGEPSYRVKL…DLLKKTVVEL (361 aa)). Residue 403-410 (GQENVGKT) participates in GTP binding. Disordered stretches follow at residues 491-582 (NSNG…VGTN) and 602-621 (SNLSIGGSNGNNNNNSGGSG). Low complexity-rich tracts occupy residues 492-512 (SNGVNSNSQININSSSGNIHS), 519-531 (NVNSSGGIHSNNS), 539-568 (NSFLNNTNSNGTNNNSSNLNINTNSNNVNS), and 602-617 (SNLSIGGSNGNNNNNS). Residues 634 to 638 (DCAGQ) and 691 to 694 (THLD) each bind GTP. Residues 758–892 (PELYLKLEKL…RFELMFPLDS (135 aa)) form the COR domain. Composition is skewed to low complexity over residues 905-941 (GNSYVNNNNNNNNNSNNNNNGSNKSSPFKTTPSSPST) and 960-977 (SGNNSSSKNSTSTKRSIS). Residues 905 to 995 (GNSYVNNNNN…NSDLDLIGGG (91 aa)) are disordered. A WD 1 repeat occupies 1051 to 1098 (VEFNRWIQLSFAPAGLFSRLLIRLLISKEFDMKPILYWRNGVVVESQS). The chain crosses the membrane as a helical span at residues 1056-1076 (WIQLSFAPAGLFSRLLIRLLI). Residues 1077 to 2147 (SKEFDMKPIL…CGTNNVCIWS (1071 aa)) are Cytoplasmic-facing. LRR repeat units follow at residues 1237–1263 (ILSIKPASFGNNQIQFEVRVPPSPPPP), 1274–1297 (DDNITTTTLAVNNIKVLESGGSQP), and 1325–1348 (ESSLIQVEFDHNNQTLVISGTYKY). Residues 1356–1627 (FESPKLIGRG…KIVKRIKQII (272 aa)) enclose the Protein kinase domain. ATP contacts are provided by residues 1362-1370 (IGRGASGKI) and Lys-1383. The active-site Proton acceptor is the Asp-1481. The segment at 1653 to 1699 (ADSQPFHYHQQQQPSLNSTNQLQQQQYSSVLTSPRSNLSDSSNSSQN) is disordered. Positions 1662-1699 (QQQQPSLNSTNQLQQQQYSSVLTSPRSNLSDSSNSSQN) are enriched in low complexity. WD repeat units lie at residues 1735-1774 (QPEAKVNQLVWEVNSRRVWGGCESGEIIVWNAENGNQIFR) and 1778-1820 (LHPG…LDDQ). One can recognise a PH domain in the interval 1821-1923 (SGTKSDFITK…WLTAINRVIN (103 aa)). A WD 4 repeat occupies 2031–2068 (HYSKPITSMALVEKNVWISCEDESLSVWDGDTGSFIRK).

It belongs to the protein kinase superfamily. TKL Ser/Thr protein kinase family. ROCO subfamily.

The protein resides in the membrane. The enzyme catalyses L-seryl-[protein] + ATP = O-phospho-L-seryl-[protein] + ADP + H(+). It catalyses the reaction L-threonyl-[protein] + ATP = O-phospho-L-threonyl-[protein] + ADP + H(+). Functionally, may act as a serine/threonine-protein kinase and guanine-nucleotide releasing factor. The polypeptide is Probable serine/threonine-protein kinase roco6 (roco6) (Dictyostelium discoideum (Social amoeba)).